The following is a 139-amino-acid chain: uncharacterized protein (139 aa).

2 helical membrane-spanning segments follow: residues 71-91 (LFSA…ATLL) and 97-117 (ENEL…FVMV).

This sequence belongs to the RseC family.

Its subcellular location is the cell inner membrane. This is an uncharacterized protein from Haemophilus influenzae (strain ATCC 51907 / DSM 11121 / KW20 / Rd).